Here is a 102-residue protein sequence, read N- to C-terminus: PqqA binding protein (102 aa).

The protein belongs to the PqqD family. In terms of assembly, monomer. Interacts with PqqE.

It functions in the pathway cofactor biosynthesis; pyrroloquinoline quinone biosynthesis. Functions as a PqqA binding protein and presents PqqA to PqqE, in the pyrroloquinoline quinone (PQQ) biosynthetic pathway. In Rhodopseudomonas palustris (strain BisB5), this protein is PqqA binding protein.